A 385-amino-acid chain; its full sequence is Putative F-box protein At1g49610 (385 aa).

The 49-residue stretch at 25 to 73 (VDSISSLPDVILQENLSLIPTKFAIRTSVLSKRWRHVWSETPSLDFDDC) folds into the F-box domain.

In Arabidopsis thaliana (Mouse-ear cress), this protein is Putative F-box protein At1g49610.